The following is a 245-amino-acid chain: Retrovirus-related Pol polyprotein from type-1 retrotransposable element R1 (245 aa).

Residues 1 to 105 (LKDGTGIVAA…VDLETYCNKA (105 aa)) enclose the Reverse transcriptase domain. A nucleic acid-binding endonuclease region spans residues 106-245 (EVRQKFREKE…IVRDDSNLEQ (140 aa)).

The catalysed reaction is DNA(n) + a 2'-deoxyribonucleoside 5'-triphosphate = DNA(n+1) + diphosphate. The sequence is that of Retrovirus-related Pol polyprotein from type-1 retrotransposable element R1 from Popillia japonica (Japanese beetle).